Reading from the N-terminus, the 340-residue chain is Biotin synthase (340 aa).

A Radical SAM core domain is found at Ser-47–Lys-269. [4Fe-4S] cluster contacts are provided by Cys-62, Cys-66, and Cys-69. [2Fe-2S] cluster contacts are provided by Cys-106, Cys-137, Cys-197, and Arg-273.

This sequence belongs to the radical SAM superfamily. Biotin synthase family. As to quaternary structure, homodimer. The cofactor is [4Fe-4S] cluster. Requires [2Fe-2S] cluster as cofactor.

It catalyses the reaction (4R,5S)-dethiobiotin + (sulfur carrier)-SH + 2 reduced [2Fe-2S]-[ferredoxin] + 2 S-adenosyl-L-methionine = (sulfur carrier)-H + biotin + 2 5'-deoxyadenosine + 2 L-methionine + 2 oxidized [2Fe-2S]-[ferredoxin]. It functions in the pathway cofactor biosynthesis; biotin biosynthesis; biotin from 7,8-diaminononanoate: step 2/2. Functionally, catalyzes the conversion of dethiobiotin (DTB) to biotin by the insertion of a sulfur atom into dethiobiotin via a radical-based mechanism. The protein is Biotin synthase of Caulobacter sp. (strain K31).